The primary structure comprises 650 residues: Serine/threonine-protein phosphatase with EF-hands 1 (650 aa).

The 30-residue stretch at Val16–Phe45 folds into the IQ domain. Residues Ile124–Ser456 are catalytic. Mn(2+) contacts are provided by Asp175, His177, Asp204, and Asn236. The Proton donor role is filled by His237. His288 is a binding site for Mn(2+). A disordered region spans residues Pro315–Asp348. Positions Glu335–Asp348 are enriched in basic and acidic residues. His404 lines the Mn(2+) pocket. 3 EF-hand domains span residues Ser484 to Leu519, Arg567 to His602, and Ile607 to Tyr642. 14 residues coordinate Ca(2+): Asp497, Ser499, Ser501, Arg503, Glu508, Asp580, Asp582, Ser584, Glu591, Asp620, Asn622, Asp624, Asn626, and Glu631.

Belongs to the PPP phosphatase family. Requires Mn(2+) as cofactor. Mg(2+) serves as cofactor. As to expression, in the embryo it is almost exclusively expressed in the peripheral nervous system, within sensory neurons of cranial and dorsal root ganglia. Otherwise found in fetal inner ear and a small group of neurons in the midbrain/pons junction.

It catalyses the reaction O-phospho-L-seryl-[protein] + H2O = L-seryl-[protein] + phosphate. It carries out the reaction O-phospho-L-threonyl-[protein] + H2O = L-threonyl-[protein] + phosphate. Its activity is regulated as follows. Activated by calcium. Its function is as follows. May have a role in the recovery or adaptation response of photoreceptors. May have a role in diverse sensory neurons and in development. This chain is Serine/threonine-protein phosphatase with EF-hands 1 (Ppef1), found in Mus musculus (Mouse).